Consider the following 230-residue polypeptide: Flagellar L-ring protein (230 aa).

The signal sequence occupies residues 1–15 (MSRLPSLSRLCLAIA). The N-palmitoyl cysteine moiety is linked to residue Cys16. A lipid anchor (S-diacylglycerol cysteine) is attached at Cys16.

It belongs to the FlgH family. As to quaternary structure, the basal body constitutes a major portion of the flagellar organelle and consists of four rings (L,P,S, and M) mounted on a central rod.

The protein resides in the cell outer membrane. The protein localises to the bacterial flagellum basal body. Assembles around the rod to form the L-ring and probably protects the motor/basal body from shearing forces during rotation. The protein is Flagellar L-ring protein of Xanthomonas euvesicatoria pv. vesicatoria (strain 85-10) (Xanthomonas campestris pv. vesicatoria).